We begin with the raw amino-acid sequence, 213 residues long: Kynurenine formamidase (213 aa).

Trp18 contacts substrate. His48, His52, and Asp54 together coordinate Zn(2+). The Proton donor/acceptor role is filled by His58. Residues His160 and Glu172 each coordinate Zn(2+).

The protein belongs to the Cyclase 1 superfamily. KynB family. In terms of assembly, homodimer. Requires Zn(2+) as cofactor.

It carries out the reaction N-formyl-L-kynurenine + H2O = L-kynurenine + formate + H(+). Its pathway is amino-acid degradation; L-tryptophan degradation via kynurenine pathway; L-kynurenine from L-tryptophan: step 2/2. In terms of biological role, catalyzes the hydrolysis of N-formyl-L-kynurenine to L-kynurenine, the second step in the kynurenine pathway of tryptophan degradation. This Burkholderia lata (strain ATCC 17760 / DSM 23089 / LMG 22485 / NCIMB 9086 / R18194 / 383) protein is Kynurenine formamidase.